The chain runs to 360 residues: Malonyl CoA-acyl carrier protein transacylase, mitochondrial (360 aa).

The transit peptide at 1–24 (MKLLTFPGQGTSISISILKAIIRN) directs the protein to the mitochondrion. Active-site residues include Ser105 and His235.

It belongs to the FabD family.

The protein localises to the mitochondrion. It carries out the reaction holo-[ACP] + malonyl-CoA = malonyl-[ACP] + CoA. It functions in the pathway lipid metabolism; fatty acid biosynthesis. In terms of biological role, involved in biosynthesis of fatty acids in mitochondria. The protein is Malonyl CoA-acyl carrier protein transacylase, mitochondrial (MCT1) of Saccharomyces cerevisiae (strain ATCC 204508 / S288c) (Baker's yeast).